The chain runs to 444 residues: Deoxyguanosinetriphosphate triphosphohydrolase-like protein (444 aa).

The tract at residues 1–28 (MTDAVWNERRLGEDKQRRNDHRSPYQRD) is disordered. The region spanning 59-250 (RLTHSLEVSQ…MELADDIAYA (192 aa)) is the HD domain.

It belongs to the dGTPase family. Type 2 subfamily.

The protein is Deoxyguanosinetriphosphate triphosphohydrolase-like protein of Shewanella pealeana (strain ATCC 700345 / ANG-SQ1).